We begin with the raw amino-acid sequence, 266 residues long: Glucosamine-6-phosphate deaminase (266 aa).

The Proton acceptor; for enolization step role is filled by Asp72. The active-site For ring-opening step is Asp141. The Proton acceptor; for ring-opening step role is filled by His143. The For ring-opening step role is filled by Glu148.

This sequence belongs to the glucosamine/galactosamine-6-phosphate isomerase family. NagB subfamily. As to quaternary structure, homohexamer.

It catalyses the reaction alpha-D-glucosamine 6-phosphate + H2O = beta-D-fructose 6-phosphate + NH4(+). It functions in the pathway amino-sugar metabolism; N-acetylneuraminate degradation; D-fructose 6-phosphate from N-acetylneuraminate: step 5/5. Its activity is regulated as follows. Allosterically activated by N-acetylglucosamine 6-phosphate (GlcNAc6P). Its function is as follows. Catalyzes the reversible isomerization-deamination of glucosamine 6-phosphate (GlcN6P) to form fructose 6-phosphate (Fru6P) and ammonium ion. The protein is Glucosamine-6-phosphate deaminase of Salmonella typhimurium (strain LT2 / SGSC1412 / ATCC 700720).